We begin with the raw amino-acid sequence, 468 residues long: UDP-N-acetylmuramoyl-L-alanine--L-glutamate ligase (468 aa).

122-128 (GTKGKST) contacts ATP.

Belongs to the MurCDEF family. MurD2 subfamily.

It localises to the cytoplasm. It carries out the reaction UDP-N-acetyl-alpha-D-muramoyl-L-alanine + L-glutamate + ATP = UDP-N-acetyl-alpha-D-muramoyl-L-alanyl-L-glutamate + ADP + phosphate + H(+). It participates in cell wall biogenesis; peptidoglycan biosynthesis. Functionally, cell wall formation. Catalyzes the addition of L-glutamate to the nucleotide precursor UDP-N-acetylmuramoyl-L-alanine. Has weak activity with D-glutamate. This Xanthomonas oryzae pv. oryzae (strain MAFF 311018) protein is UDP-N-acetylmuramoyl-L-alanine--L-glutamate ligase.